The chain runs to 213 residues: Dephospho-CoA kinase (213 aa).

Positions 3–202 (RIGLTGGIGS…QSYLALADKH (200 aa)) constitute a DPCK domain. Position 11-16 (11-16 (GSGKTR)) interacts with ATP.

Belongs to the CoaE family.

The protein localises to the cytoplasm. It carries out the reaction 3'-dephospho-CoA + ATP = ADP + CoA + H(+). It participates in cofactor biosynthesis; coenzyme A biosynthesis; CoA from (R)-pantothenate: step 5/5. In terms of biological role, catalyzes the phosphorylation of the 3'-hydroxyl group of dephosphocoenzyme A to form coenzyme A. The sequence is that of Dephospho-CoA kinase from Bordetella avium (strain 197N).